Consider the following 368-residue polypeptide: Branched-chain-amino-acid aminotransferase (368 aa).

Arginine 101 serves as a coordination point for pyridoxal 5'-phosphate. The residue at position 204 (lysine 204) is an N6-(pyridoxal phosphate)lysine. Pyridoxal 5'-phosphate-binding positions include tyrosine 209 and 271–272; that span reads IT. An Isoglutamyl lysine isopeptide (Lys-Gln) (interchain with Q-Cter in protein Pup) cross-link involves residue lysine 299. Position 314 (threonine 314) interacts with pyridoxal 5'-phosphate.

Belongs to the class-IV pyridoxal-phosphate-dependent aminotransferase family. In terms of assembly, homodimer. It depends on pyridoxal 5'-phosphate as a cofactor.

It carries out the reaction L-isoleucine + 2-oxoglutarate = (S)-3-methyl-2-oxopentanoate + L-glutamate. The catalysed reaction is L-valine + 2-oxoglutarate = 3-methyl-2-oxobutanoate + L-glutamate. It catalyses the reaction L-leucine + 2-oxoglutarate = 4-methyl-2-oxopentanoate + L-glutamate. It functions in the pathway amino-acid biosynthesis; L-isoleucine biosynthesis; L-isoleucine from 2-oxobutanoate: step 4/4. The protein operates within amino-acid biosynthesis; L-leucine biosynthesis; L-leucine from 3-methyl-2-oxobutanoate: step 4/4. It participates in amino-acid biosynthesis; L-valine biosynthesis; L-valine from pyruvate: step 4/4. Inhibited by ammonium sulfate at millimolar concentrations and by O-benzylhydroxylamine (Obe). Catalyzes the reversible transfers of an amino group from glutamate to the alpha-ketoacid of the respective amino acid in the final step in the biosynthesis of branchedchain amino acids. The amino acids can be ranked in the following order with respect to their efficiency as amino donor: Leu &gt; Ile &gt; Val. The chain is Branched-chain-amino-acid aminotransferase (ilvE) from Mycolicibacterium smegmatis (strain ATCC 700084 / mc(2)155) (Mycobacterium smegmatis).